The sequence spans 67 residues: uncharacterized protein (67 aa).

Transmembrane regions (helical) follow at residues 10–30 (EFFI…IIMW) and 40–60 (LMVG…WMVF).

It belongs to the plectrovirus ORF10 family.

It is found in the host membrane. This is an uncharacterized protein from Spiroplasma melliferum (SpV1).